The sequence spans 443 residues: Probable glycine dehydrogenase (decarboxylating) subunit 1 (443 aa).

It belongs to the GcvP family. N-terminal subunit subfamily. In terms of assembly, the glycine cleavage system is composed of four proteins: P, T, L and H. In this organism, the P 'protein' is a heterodimer of two subunits.

The catalysed reaction is N(6)-[(R)-lipoyl]-L-lysyl-[glycine-cleavage complex H protein] + glycine + H(+) = N(6)-[(R)-S(8)-aminomethyldihydrolipoyl]-L-lysyl-[glycine-cleavage complex H protein] + CO2. Functionally, the glycine cleavage system catalyzes the degradation of glycine. The P protein binds the alpha-amino group of glycine through its pyridoxal phosphate cofactor; CO(2) is released and the remaining methylamine moiety is then transferred to the lipoamide cofactor of the H protein. This chain is Probable glycine dehydrogenase (decarboxylating) subunit 1, found in Nitratidesulfovibrio vulgaris (strain DSM 19637 / Miyazaki F) (Desulfovibrio vulgaris).